The primary structure comprises 336 residues: Phospho-N-acetylmuramoyl-pentapeptide-transferase (336 aa).

The next 10 membrane-spanning stretches (helical) occupy residues 3-23 (LTLI…PYFI), 53-73 (GGTV…LFSI), 78-98 (SLAL…IGFL), 118-138 (LALQ…PSGI), 143-163 (VFGY…FWVV), 174-194 (GIDG…GVIA), 200-220 (FDVL…FCFN), 226-246 (VFMG…ISIA), 254-274 (LIIG…VFYF), and 316-336 (AFLW…LYVF).

The protein belongs to the glycosyltransferase 4 family. MraY subfamily. It depends on Mg(2+) as a cofactor.

It localises to the cell membrane. It carries out the reaction UDP-N-acetyl-alpha-D-muramoyl-L-alanyl-gamma-D-glutamyl-L-lysyl-D-alanyl-D-alanine + di-trans,octa-cis-undecaprenyl phosphate = Mur2Ac(oyl-L-Ala-gamma-D-Glu-L-Lys-D-Ala-D-Ala)-di-trans,octa-cis-undecaprenyl diphosphate + UMP. It functions in the pathway cell wall biogenesis; peptidoglycan biosynthesis. Functionally, catalyzes the initial step of the lipid cycle reactions in the biosynthesis of the cell wall peptidoglycan: transfers peptidoglycan precursor phospho-MurNAc-pentapeptide from UDP-MurNAc-pentapeptide onto the lipid carrier undecaprenyl phosphate, yielding undecaprenyl-pyrophosphoryl-MurNAc-pentapeptide, known as lipid I. This is Phospho-N-acetylmuramoyl-pentapeptide-transferase from Streptococcus pyogenes serotype M18 (strain MGAS8232).